A 330-amino-acid polypeptide reads, in one-letter code: ADP-L-glycero-D-manno-heptose-6-epimerase (330 aa).

NADP(+) is bound by residues 11–12, 32–33, K39, K54, 75–79, and N92; these read FI, DN, and EGACS. The active-site Proton acceptor is the Y139. K143 provides a ligand contact to NADP(+). N168 provides a ligand contact to substrate. NADP(+)-binding residues include V169 and K177. The active-site Proton acceptor is the K177. Substrate-binding positions include R179, H186, 200–203, R213, and Y292; that span reads FGEY.

The protein belongs to the NAD(P)-dependent epimerase/dehydratase family. HldD subfamily. Homopentamer. NADP(+) serves as cofactor.

The enzyme catalyses ADP-D-glycero-beta-D-manno-heptose = ADP-L-glycero-beta-D-manno-heptose. It functions in the pathway nucleotide-sugar biosynthesis; ADP-L-glycero-beta-D-manno-heptose biosynthesis; ADP-L-glycero-beta-D-manno-heptose from D-glycero-beta-D-manno-heptose 7-phosphate: step 4/4. Functionally, catalyzes the interconversion between ADP-D-glycero-beta-D-manno-heptose and ADP-L-glycero-beta-D-manno-heptose via an epimerization at carbon 6 of the heptose. This chain is ADP-L-glycero-D-manno-heptose-6-epimerase, found in Burkholderia cenocepacia (strain HI2424).